The following is a 629-amino-acid chain: 1-deoxy-D-xylulose-5-phosphate synthase (629 aa).

Thiamine diphosphate-binding positions include His-78 and 119-121 (AHS). Asp-150 lines the Mg(2+) pocket. Thiamine diphosphate is bound by residues 151–152 (GA), Asn-179, Tyr-286, and Glu-368. A Mg(2+)-binding site is contributed by Asn-179.

Belongs to the transketolase family. DXPS subfamily. As to quaternary structure, homodimer. Mg(2+) is required as a cofactor. Requires thiamine diphosphate as cofactor.

The catalysed reaction is D-glyceraldehyde 3-phosphate + pyruvate + H(+) = 1-deoxy-D-xylulose 5-phosphate + CO2. Its pathway is metabolic intermediate biosynthesis; 1-deoxy-D-xylulose 5-phosphate biosynthesis; 1-deoxy-D-xylulose 5-phosphate from D-glyceraldehyde 3-phosphate and pyruvate: step 1/1. Functionally, catalyzes the acyloin condensation reaction between C atoms 2 and 3 of pyruvate and glyceraldehyde 3-phosphate to yield 1-deoxy-D-xylulose-5-phosphate (DXP). This Acidovorax sp. (strain JS42) protein is 1-deoxy-D-xylulose-5-phosphate synthase.